A 370-amino-acid chain; its full sequence is Dual-specificity RNA methyltransferase RlmN (370 aa).

The Proton acceptor role is filled by Glu-93. The Radical SAM core domain occupies 99-337 (EEGRGTLCVS…VTTVRKTRGD (239 aa)). A disulfide bridge connects residues Cys-106 and Cys-343. Positions 113, 117, and 120 each coordinate [4Fe-4S] cluster. Residues 167–168 (GE), Ser-199, 221–223 (SLH), and Asn-300 contribute to the S-adenosyl-L-methionine site. Cys-343 (S-methylcysteine intermediate) is an active-site residue.

It belongs to the radical SAM superfamily. RlmN family. It depends on [4Fe-4S] cluster as a cofactor.

The protein localises to the cytoplasm. It carries out the reaction adenosine(2503) in 23S rRNA + 2 reduced [2Fe-2S]-[ferredoxin] + 2 S-adenosyl-L-methionine = 2-methyladenosine(2503) in 23S rRNA + 5'-deoxyadenosine + L-methionine + 2 oxidized [2Fe-2S]-[ferredoxin] + S-adenosyl-L-homocysteine. It catalyses the reaction adenosine(37) in tRNA + 2 reduced [2Fe-2S]-[ferredoxin] + 2 S-adenosyl-L-methionine = 2-methyladenosine(37) in tRNA + 5'-deoxyadenosine + L-methionine + 2 oxidized [2Fe-2S]-[ferredoxin] + S-adenosyl-L-homocysteine. Its function is as follows. Specifically methylates position 2 of adenine 2503 in 23S rRNA and position 2 of adenine 37 in tRNAs. m2A2503 modification seems to play a crucial role in the proofreading step occurring at the peptidyl transferase center and thus would serve to optimize ribosomal fidelity. In Francisella tularensis subsp. novicida (strain U112), this protein is Dual-specificity RNA methyltransferase RlmN.